The primary structure comprises 190 residues: Hypoxanthine/guanine phosphoribosyltransferase (190 aa).

It belongs to the purine/pyrimidine phosphoribosyltransferase family. Archaeal HPRT subfamily. In terms of assembly, homodimer.

The protein localises to the cytoplasm. It carries out the reaction IMP + diphosphate = hypoxanthine + 5-phospho-alpha-D-ribose 1-diphosphate. The enzyme catalyses GMP + diphosphate = guanine + 5-phospho-alpha-D-ribose 1-diphosphate. The protein operates within purine metabolism; IMP biosynthesis via salvage pathway; IMP from hypoxanthine: step 1/1. Its function is as follows. Catalyzes a salvage reaction resulting in the formation of IMP that is energically less costly than de novo synthesis. The sequence is that of Hypoxanthine/guanine phosphoribosyltransferase from Methanosalsum zhilinae (strain DSM 4017 / NBRC 107636 / OCM 62 / WeN5) (Methanohalophilus zhilinae).